Reading from the N-terminus, the 235-residue chain is Ribosomal RNA small subunit methyltransferase G (235 aa).

S-adenosyl-L-methionine contacts are provided by residues glycine 98, methionine 103, 149–150, and arginine 164; that span reads VE.

This sequence belongs to the methyltransferase superfamily. RNA methyltransferase RsmG family.

The protein resides in the cytoplasm. It carries out the reaction guanosine(527) in 16S rRNA + S-adenosyl-L-methionine = N(7)-methylguanosine(527) in 16S rRNA + S-adenosyl-L-homocysteine. Its function is as follows. Specifically methylates the N7 position of guanine in position 527 of 16S rRNA. This Cupriavidus metallidurans (strain ATCC 43123 / DSM 2839 / NBRC 102507 / CH34) (Ralstonia metallidurans) protein is Ribosomal RNA small subunit methyltransferase G.